A 262-amino-acid polypeptide reads, in one-letter code: Ribosomal RNA small subunit methyltransferase A (262 aa).

N13, L15, G40, E61, D85, and N105 together coordinate S-adenosyl-L-methionine.

The protein belongs to the class I-like SAM-binding methyltransferase superfamily. rRNA adenine N(6)-methyltransferase family. RsmA subfamily.

The protein resides in the cytoplasm. The catalysed reaction is adenosine(1518)/adenosine(1519) in 16S rRNA + 4 S-adenosyl-L-methionine = N(6)-dimethyladenosine(1518)/N(6)-dimethyladenosine(1519) in 16S rRNA + 4 S-adenosyl-L-homocysteine + 4 H(+). In terms of biological role, specifically dimethylates two adjacent adenosines (A1518 and A1519) in the loop of a conserved hairpin near the 3'-end of 16S rRNA in the 30S particle. May play a critical role in biogenesis of 30S subunits. This Laribacter hongkongensis (strain HLHK9) protein is Ribosomal RNA small subunit methyltransferase A.